The following is a 131-amino-acid chain: Large ribosomal subunit protein bL17 (131 aa).

It belongs to the bacterial ribosomal protein bL17 family. Part of the 50S ribosomal subunit. Contacts protein L32.

This chain is Large ribosomal subunit protein bL17, found in Shewanella oneidensis (strain ATCC 700550 / JCM 31522 / CIP 106686 / LMG 19005 / NCIMB 14063 / MR-1).